A 260-amino-acid chain; its full sequence is Phosphatidylglycerol--prolipoprotein diacylglyceryl transferase (260 aa).

4 helical membrane passes run 17 to 37 (VVKWYGIMMALGVVALVSWIF), 52 to 72 (LTAAIIAIPSGIVFAKLLHVI), 85 to 105 (IFSGEGLTIFGAIIGATIGLW), and 113 to 133 (FNLGYLLDVAVPGILLGQAIG). R134 lines the a 1,2-diacyl-sn-glycero-3-phospho-(1'-sn-glycerol) pocket. Transmembrane regions (helical) follow at residues 170–190 (APTQAYEIIFLLCLLTFSLFI), 198–218 (GQLFLLYISLYAAWRVAIGFV), and 227–247 (GLEQAQVVGLILMAVAVPLFI).

Belongs to the Lgt family.

The protein resides in the cell membrane. The catalysed reaction is L-cysteinyl-[prolipoprotein] + a 1,2-diacyl-sn-glycero-3-phospho-(1'-sn-glycerol) = an S-1,2-diacyl-sn-glyceryl-L-cysteinyl-[prolipoprotein] + sn-glycerol 1-phosphate + H(+). It participates in protein modification; lipoprotein biosynthesis (diacylglyceryl transfer). In terms of biological role, catalyzes the transfer of the diacylglyceryl group from phosphatidylglycerol to the sulfhydryl group of the N-terminal cysteine of a prolipoprotein, the first step in the formation of mature lipoproteins. The sequence is that of Phosphatidylglycerol--prolipoprotein diacylglyceryl transferase from Dehalococcoides mccartyi (strain ATCC BAA-2100 / JCM 16839 / KCTC 5957 / BAV1).